Here is a 2262-residue protein sequence, read N- to C-terminus: Klarsicht protein (2262 aa).

10 disordered regions span residues M1–D140, Q345–N410, A442–V475, Q514–G561, A800–N832, S859–M898, H1000–V1031, P1115–F1157, S1246–G1316, and V1533–R1670. Residues M1 to E1774 are required for apical microtubules localization. Topologically, residues M1 to R2215 are cytoplasmic. The span at K58–K67 shows a compositional bias: basic and acidic residues. The span at N131–D140 shows a compositional bias: polar residues. Positions Q345 to H402 are enriched in low complexity. Residues L446–V475 are compositionally biased toward acidic residues. The segment covering Q514 to Q525 has biased composition (low complexity). Residues E546 to I560 are compositionally biased toward acidic residues. Low complexity-rich tracts occupy residues S809–T818 and S859–N881. Over residues G882–T894 the composition is skewed to polar residues. A compositionally biased stretch (low complexity) spans P1006–S1018. Residues N1019 to V1028 are compositionally biased toward polar residues. A compositionally biased stretch (polar residues) spans S1246–D1259. The segment covering P1267–A1280 has biased composition (low complexity). Over residues S1288–I1299 the composition is skewed to basic residues. Positions Q1550 to Q1559 are enriched in low complexity. Over residues V1560–Q1583 the composition is skewed to polar residues. Composition is skewed to basic and acidic residues over residues H1586–D1596 and R1610–I1640. A coiled-coil region spans residues L1809 to K1842. A disordered region spans residues H2092–S2205. The span at Q2093 to Q2105 shows a compositional bias: low complexity. Basic residues predominate over residues R2130–K2142. The KASH domain occupies R2207–I2262. The chain crosses the membrane as a helical; Anchor for type IV membrane protein span at residues A2216–P2236. The Perinuclear space portion of the chain corresponds to N2237–I2262.

This sequence belongs to the nesprin family. In terms of assembly, core component of LINC complexes which are composed of inner nuclear membrane SUN domain-containing proteins coupled to outer nuclear membrane KASH domain-containing nesprins. Interacts with kud. Interacts with Msp300; this interaction allows the anchoring of Msp300 nuclear ring structure to the nuclear envelope. In terms of tissue distribution, expressed ubiquitously in the eye disk, but at much higher levels posterior to the morphogenetic furrow. Expressed in R-cells and also in non-neural cone cells.

It is found in the cytoplasm. The protein resides in the cytoskeleton. Its subcellular location is the microtubule organizing center. The protein localises to the perinuclear region. It localises to the nucleus membrane. It is found in the nucleus envelope. Functionally, component of the LINC (LInker of Nucleoskeleton and Cytoskeleton) complex involved in the connection between the nuclear lamina and the cytoskeleton. Plays a role in the nuclear positioning and links the nucleus to the microtubule organizing center (MTOC). Collaborates with Klar to promote even spacing of the myonuclei at the periphery of striated muscle fibers by mediating a tight association between a nuclear ring structure of Msp300 and the plus ends of a unique astral microtubule (MT) network. This is Klarsicht protein from Drosophila melanogaster (Fruit fly).